A 349-amino-acid chain; its full sequence is NADH-quinone oxidoreductase subunit H (349 aa).

The next 8 helical transmembrane spans lie at Leu14–Ala34, Gly85–Ile105, Leu120–Ala140, Met164–Val184, Ile196–Val216, Gly243–Leu263, Ala285–Phe305, and Val324–Leu344.

This sequence belongs to the complex I subunit 1 family. As to quaternary structure, NDH-1 is composed of 14 different subunits. Subunits NuoA, H, J, K, L, M, N constitute the membrane sector of the complex.

It is found in the cell inner membrane. The catalysed reaction is a quinone + NADH + 5 H(+)(in) = a quinol + NAD(+) + 4 H(+)(out). In terms of biological role, NDH-1 shuttles electrons from NADH, via FMN and iron-sulfur (Fe-S) centers, to quinones in the respiratory chain. The immediate electron acceptor for the enzyme in this species is believed to be ubiquinone. Couples the redox reaction to proton translocation (for every two electrons transferred, four hydrogen ions are translocated across the cytoplasmic membrane), and thus conserves the redox energy in a proton gradient. This subunit may bind ubiquinone. The sequence is that of NADH-quinone oxidoreductase subunit H from Chromobacterium violaceum (strain ATCC 12472 / DSM 30191 / JCM 1249 / CCUG 213 / NBRC 12614 / NCIMB 9131 / NCTC 9757 / MK).